The following is a 4599-amino-acid chain: Low-density lipoprotein receptor-related protein 1B (4599 aa).

Positions 1–20 are cleaved as a signal peptide; it reads MSEFLLALLTLSGLLPIARV. At 25–4444 the chain is on the extracellular side; the sequence is ADRDQQLCDP…KSDHISTRSI (4420 aa). LDL-receptor class A domains lie at 31 to 70 and 76 to 114; these read LCDPGEFLCHDHVTCVSQSWLCDGDPDCPDDSDESLDTCP and KCPLNHIACLGTNKCVHLSQLCNGVLDCPDGYDEGVHCQ. 12 disulfides stabilise this stretch: C32–C45, C39–C58, C52–C69, C77–C90, C84–C103, C97–C113, C120–C129, C125–C138, C140–C153, C159–C169, C165–C178, and C180–C193. Residues 116-154 enclose the EGF-like 1 domain; sequence LLSNCQQLNCQYKCTMVRNSTRCYCEDGFEITEDGRSCK. A glycan (N-linked (GlcNAc...) asparagine) is linked at N134. Positions 155–194 constitute an EGF-like 2; calcium-binding domain; the sequence is DQDECAVYGTCSQTCRNTHGSYTCSCVEGYLMQPDNRSCK. N-linked (GlcNAc...) asparagine glycosylation is found at N190, N220, N313, and N360. LDL-receptor class B repeat units lie at residues 295-337, 338-381, and 382-425; these read RNLY…DPIA, GKLF…DLVN, and KLVY…FEDY. A glycan (N-linked (GlcNAc...) asparagine) is linked at N443. In terms of domain architecture, EGF-like 3 spans 471-517; the sequence is RSHACEVDPYGMPGGCSHICLLSSSYKTRTCRCRTGFNLGSDGRSCK. LDL-receptor class B repeat units follow at residues 568 to 610, 611 to 656, 657 to 706, and 707 to 750; these read NYIY…DWIG, NNLY…DPVN, GWMY…DFHT, and NTLY…HGNY. N-linked (GlcNAc...) asparagine glycans are attached at residues N725 and N758. Residues 794 to 834 form the EGF-like 4 domain; the sequence is GDNMCRVNNGGCSTLCLAIPGGRVCACADNQLLDENGTTCT. Intrachain disulfides connect C798/C809, C805/C818, C820/C833, C845/C857, C852/C870, and C864/C881. N829 is a glycosylation site (N-linked (GlcNAc...) asparagine). The LDL-receptor class A 3 domain maps to 844–882; that stretch reads ICKAGEFRCKNRHCIQARWKCDGDDDCLDGSDEDSVNCF. The N-linked (GlcNAc...) asparagine glycan is linked to N883. LDL-receptor class A domains lie at 885 to 923, 926 to 963, 966 to 1003, 1005 to 1043, 1052 to 1089, 1094 to 1132, and 1135 to 1174; these read SCPDDQFKCQNNRCIPKRWLCDGANDCGSNEDESNQTCT, TCQVDQFSCGNGRCIPRAWLCDREDDCGDQTDEMASCE, TCEPLTQFVCKSGRCISSKWHCDSDDDCGDGSDEVGCV, SCFDNQFRCSSGRCIPGHWACDGDNDCGDFSDEAQINCT, GCNGNEFQCHPDGNCVPDLWRCDGEKDCEDGSDEKGCN, LCDHKTKFSCWSTGRCINKAWVCDGDIDCEDQSDEDDCD, and LCGPPKHPCANDTSVCLQPEKLCNGKKDCPDGSDEGYLCD. Intrachain disulfides connect C886–C898, C893–C911, C905–C922, C927–C939, C934–C952, C946–C962, C967–C980, C975–C993, C987–C1002, C1006–C1018, C1013–C1031, C1025–C1042, C1053–C1066, C1060–C1079, and C1073–C1088. N919 carries an N-linked (GlcNAc...) asparagine glycan. N1041 carries an N-linked (GlcNAc...) asparagine glycan. N1089 carries N-linked (GlcNAc...) asparagine glycosylation. 6 cysteine pairs are disulfide-bonded: C1095/C1109, C1103/C1122, C1116/C1131, C1136/C1150, C1143/C1163, and C1157/C1173. N1145 is a glycosylation site (N-linked (GlcNAc...) asparagine). EGF-like domains are found at residues 1174 to 1213 and 1214 to 1253; these read DECSLNNGGCSNHCSVVPGRGIVCSCPEGLQLNKDNKTCE and IVDYCSNHLKCSQVCEQHKHTVKCSCYEGWKLDVDGESCT. A glycan (N-linked (GlcNAc...) asparagine) is linked at N1209. A glycan (N-linked (GlcNAc...) asparagine) is linked at N1298. LDL-receptor class B repeat units follow at residues 1300–1346, 1347–1389, 1390–1436, 1437–1480, and 1481–1522; these read SLLY…DWIA, GNIY…DPRY, GILF…DHFE, KRIV…LYGS, and EVYW…YHPS. Residues N1502, N1549, and N1636 are each glycosylated (N-linked (GlcNAc...) asparagine). Positions 1527–1570 constitute an EGF-like 7 domain; that stretch reads APNPCAANDGKGPCSHMCLINHNRSAACACPHLMKLSSDKKTCY. LDL-receptor class B repeat units follow at residues 1618–1660, 1661–1704, 1705–1744, and 1745–1787; these read ERLY…DWVS, RNLY…HPVR, GKLYWTDGNTINMANMDGSNSKILFQNQKEPVGLSIDYVE, and NKLY…TIMD. N1754 and N1816 each carry an N-linked (GlcNAc...) asparagine glycan. An EGF-like 8 domain is found at 1834–1875; it reads GSNSCQLNNGGCSQLCLPTSETTRTCMCTVGYYLQKNRMSCQ. 3 cysteine pairs are disulfide-bonded: C1838–C1849, C1845–C1859, and C1861–C1874. An N-linked (GlcNAc...) asparagine glycan is attached at N1921. LDL-receptor class B repeat units lie at residues 1922 to 1964, 1965 to 2007, 2008 to 2051, and 2052 to 2095; these read DTIY…DWIA, GNIY…HPEK, GLLF…DYEE, and NKLY…FGAY. N1983 is a glycosylation site (N-linked (GlcNAc...) asparagine). A glycan (N-linked (GlcNAc...) asparagine) is linked at N2105. The 41-residue stretch at 2143–2183 folds into the EGF-like 9 domain; the sequence is GTNVCARDNGGCKQLCLYRGNSRRTCACAHGYLAEDGVTCL. 3 cysteine pairs are disulfide-bonded: C2147-C2158, C2154-C2168, and C2170-C2182. LDL-receptor class B repeat units follow at residues 2239–2280, 2281–2329, 2330–2374, 2375–2416, and 2417–2459; these read NRIF…HRAW, DTLY…DECQ, NLMF…DYRA, EKLY…VYDN, and YIFW…VAND. N-linked (GlcNAc...) asparagine glycosylation is found at N2458, N2488, and N2507. An EGF-like 10 domain is found at 2464-2504; sequence ELSPCALLNGGCHDLCLLTPNGRVNCSCRGDRILLEDNRCV. An LDL-receptor class A 11 domain is found at 2509-2548; that stretch reads SCNAYSEFECGNGECIDYQLTCDGIPHCKDKSDEKLLYCE. 3 disulfide bridges follow: C2510–C2523, C2518–C2536, and C2530–C2547. N2549 is a glycosylation site (N-linked (GlcNAc...) asparagine). LDL-receptor class A domains lie at 2551-2587, 2590-2626, 2629-2675, 2681-2717, 2719-2757, and 2760-2800; these read SCRRGFKPCYNRRCIPHGKLCDGENDCGDNSDELDCK, TCATVEFRCADGTCIPRSARCNQNIDCADASDEKNCN, DCTH…LKCP, KCEENYFSCPSGRCILNTWICDGQKDCEDGRDEFHCD, SCSWNQFACSAQKCISKHWICDGEDDCGDGLDESDSICG, and TCAA…AGCA. Intrachain disulfides connect C2552-C2564, C2559-C2577, C2571-C2586, C2591-C2603, C2598-C2616, and C2610-C2625. 2 N-linked (GlcNAc...) asparagine glycosylation sites follow: N2626 and N2647. Disulfide bonds link C2630–C2652, C2646–C2665, C2659–C2674, C2682–C2694, C2689–C2707, C2701–C2716, C2720–C2732, C2727–C2745, C2739–C2756, C2761–C2774, C2768–C2787, and C2781–C2799. The N-linked (GlcNAc...) asparagine glycan is linked to N2802. LDL-receptor class A domains follow at residues 2804-2841, 2844-2885, and 2890-2926; these read TCDENAFMCHNKVCIPKQFVCDHDDDCGDGSDESPQCG, QCGT…PKCK, and SCNSSFFMCKNGRCIPSGGLCDNKDDCGDGSDERNCH. 15 cysteine pairs are disulfide-bonded: C2805–C2817, C2812–C2830, C2824–C2840, C2845–C2857, C2852–C2871, C2865–C2884, C2891–C2903, C2898–C2916, C2910–C2925, C2930–C2942, C2938–C2951, C2953–C2966, C2972–C2982, C2978–C2991, and C2993–C3007. N-linked (GlcNAc...) asparagine glycosylation occurs at N2892. Residues 2927 to 2967 enclose the EGF-like 11 domain; it reads INECLSKKVSGCSQDCQDLPVSYKCKCWPGFQLKDDGKTCV. An EGF-like 12; calcium-binding domain is found at 2968-3008; it reads DIDECSSGFPCSQQCINTYGTYKCLCTDGYEIQPDNPNGCK. N-linked (GlcNAc...) asparagine glycans are attached at residues N3034, N3066, and N3076. LDL-receptor class B repeat units lie at residues 3055 to 3098, 3099 to 3141, 3142 to 3185, 3186 to 3224, and 3225 to 3268; these read EFIY…DWIG, KNLY…DPQA, GYLY…DYVN, RRLYWADENHIEFSNMDGSHRHKVPNQDIPGVIALTLFE, and DYIY…HSYR. N-linked (GlcNAc...) asparagine glycosylation occurs at N3164. The EGF-like 13 domain occupies 3273 to 3314; the sequence is SKHLCMINNGGCSHLCLLAPGKTHTCACPTNFYLAADNRTCL. N3310 and N3316 each carry an N-linked (GlcNAc...) asparagine glycan. 12 LDL-receptor class A domains span residues 3316-3353, 3356-3392, 3395-3432, 3435-3472, 3475-3511, 3514-3550, 3552-3588, 3593-3629, 3631-3668, 3673-3711, 3714-3752, and 3761-3797; these read NCTASQFRCKTDKCIPFWWKCDTVDDCGDGSDEPDDCP, RCQPGRFQCGTGLCALPAFICDGENDCGDNSDELNCD, VCLSGQFKCTKNQKCIPVNLRCNGQDDCGDEEDERDCP, SCSPDYFQCKTTKHCISKLWVCDEDPDCADASDEANCD, TCGPHEFQCKNNNCIPDHWRCDSQNDCSDNSDEENCK, TCTLKDFLCANGDCVSSRFWCDGDFDCADGSDERNCE, SCSKDQFRCSNGQCIPAKWKCDGHEDCKYGEDEKSCE, TCSSREYICASDGCISASLKCNGEYDCADGSDEMDCV, ECKEDQFRCKNKAHCIPIRWLCDGIHDCVDGSDEENCE, ICRADEFLCNNSLCKLHFWVCDGEDDCGDNSDEAPDMCV, LCPSTRPHRCRNNRICLQSEQMCNGIDECGDNSDEDHCG, and PCKKDEFACSNKKCIPMDLQCDRLDDCGDGSDEQGCR. 42 disulfide bridges follow: C3317-C3329, C3324-C3342, C3336-C3352, C3357-C3369, C3364-C3382, C3376-C3391, C3396-C3409, C3403-C3422, C3416-C3431, C3436-C3449, C3443-C3462, C3456-C3471, C3476-C3488, C3483-C3501, C3495-C3510, C3515-C3527, C3522-C3540, C3534-C3549, C3553-C3565, C3560-C3578, C3572-C3587, C3594-C3606, C3601-C3619, C3613-C3628, C3632-C3645, C3639-C3658, C3652-C3667, C3674-C3686, C3681-C3699, C3693-C3710, C3715-C3729, C3723-C3742, C3736-C3751, C3762-C3774, C3769-C3787, C3781-C3796, C3805-C3818, C3812-C3827, C3829-C3842, C3848-C3858, C3854-C3867, and C3869-C3880. An N-linked (GlcNAc...) asparagine glycan is attached at N3682. EGF-like domains lie at 3801 to 3843 and 3844 to 3881; these read TEYT…RQCE and DLNECLVFGTCSHQCINVEGSYKCVCDQNFQERNNTCI. N-linked (GlcNAc...) asparagine glycosylation is found at N3877, N3894, and N3906. LDL-receptor class B repeat units follow at residues 3933 to 3980, 3981 to 4038, 4039 to 4082, and 4083 to 4127; these read DMII…DWVA, GNIY…NPKR, GMMY…DYFS, and ERIY…FEDY. Residue N4017 is glycosylated (N-linked (GlcNAc...) asparagine). EGF-like domains are found at residues 4171 to 4208, 4213 to 4249, 4249 to 4285, 4285 to 4321, 4321 to 4357, 4357 to 4392, and 4390 to 4427; these read DLPNPCLDLACEFLCLLNPSGATCVCPEGKYLINGTCN, LDDSCKLTCENGGRCILNEKGDLRCHCWPSYSGERCE, EVNHCSNYCQNGGTCVPSVLGRPTCSCALGFTGPNCG, GKTVCEDFCQNGGTCIVTAGNQPYCHCQPEYTGDRCQ, QYYVCHHYCVNSESCTIGDDGSVECVCPTRYEGPKCE, EVDKCVRCHGGHCIINKDSEDIFCNCTNGKIASSCQ, and SCQLCDGYCYNGGTCQLDPETNVPVCLCSTNWSGTQCE. N4204 carries N-linked (GlcNAc...) asparagine glycosylation. 11 disulfide bridges follow: C4217–C4227, C4221–C4237, C4253–C4263, C4257–C4273, C4275–C4284, C4289–C4299, C4293–C4309, C4311–C4320, C4325–C4335, C4329–C4345, and C4347–C4356. N4381 carries N-linked (GlcNAc...) asparagine glycosylation. Cystine bridges form between C4394–C4404, C4398–C4415, and C4417–C4426. N4420 is a glycosylation site (N-linked (GlcNAc...) asparagine). A helical transmembrane segment spans residues 4445 to 4467; sequence AIIVPLVLLVTLITTLVIGLVLC. At 4468–4599 the chain is on the cytoplasmic side; it reads KRKRRTKTIR…IEIGIRETVA (132 aa). Short sequence motifs (endocytosis signal) lie at residues 4492 to 4495 and 4559 to 4562; these read NPSY and NPVY.

The protein belongs to the LDLR family. Binds LRPAP1, PLAU, PLAT and SERPINE1; binding is followed by internalization and degradation of the ligands. Expressed in thyroid gland and in salivary gland, as well as in adult and fetal brain.

It localises to the membrane. Its function is as follows. Potential cell surface proteins that bind and internalize ligands in the process of receptor-mediated endocytosis. The polypeptide is Low-density lipoprotein receptor-related protein 1B (LRP1B) (Homo sapiens (Human)).